The primary structure comprises 372 residues: DNA-directed RNA polymerase subunit alpha (372 aa).

Positions 1–268 are alpha N-terminal domain (alpha-NTD); that stretch reads MIFDEDSNSV…DQFQPFINFD (268 aa). An alpha C-terminal domain (alpha-CTD) region spans residues 280–372; sequence KDALPYDSNL…ESLSKQYSEE (93 aa).

Belongs to the RNA polymerase alpha chain family. In terms of assembly, homodimer. The RNAP catalytic core consists of 2 alpha, 1 beta, 1 beta' and 1 omega subunit. When a sigma factor is associated with the core the holoenzyme is formed, which can initiate transcription.

It carries out the reaction RNA(n) + a ribonucleoside 5'-triphosphate = RNA(n+1) + diphosphate. Its function is as follows. DNA-dependent RNA polymerase catalyzes the transcription of DNA into RNA using the four ribonucleoside triphosphates as substrates. The chain is DNA-directed RNA polymerase subunit alpha from Ehrlichia canis (strain Jake).